A 450-amino-acid chain; its full sequence is Na(+)/H(+) antiporter NhaA 1 (450 aa).

11 helical membrane-spanning segments follow: residues 35 to 55 (SSLF…SDYA), 79 to 99 (LKHI…GLEI), 117 to 137 (LIIC…GFNW), 143 to 163 (IGWG…LTMV), 173 to 193 (AFIV…IAIF), 198 to 218 (ISLM…VANY), 224 to 244 (PLFY…SGVH), 320 to 340 (LPVV…VVIN), 356 to 376 (IISG…WFAL), 392 to 412 (VIGA…IATL), and 423 to 443 (VAKT…LLYL).

It belongs to the NhaA Na(+)/H(+) (TC 2.A.33) antiporter family.

It localises to the cell inner membrane. It catalyses the reaction Na(+)(in) + 2 H(+)(out) = Na(+)(out) + 2 H(+)(in). In terms of biological role, na(+)/H(+) antiporter that extrudes sodium in exchange for external protons. This is Na(+)/H(+) antiporter NhaA 1 from Shewanella denitrificans (strain OS217 / ATCC BAA-1090 / DSM 15013).